The sequence spans 130 residues: MSKKVVSTTTAPKALGPYSQAILNDNTLYISGQIGIDPETDEFAGATTAEQAHQIFDNIDNILHEAEFSRNDIVKAALFFDDIADFALVNDIYAQYFDTTSVEEFPARSAVQVAALPKNAKLEIEITAMK.

It belongs to the RutC family.

This Leuconostoc mesenteroides subsp. cremoris protein is RutC family protein in leuC 5'region.